Consider the following 379-residue polypeptide: UDP-N-acetylglucosamine--N-acetylmuramyl-(pentapeptide) pyrophosphoryl-undecaprenol N-acetylglucosamine transferase (379 aa).

Residues 17–19 (TGG), asparagine 128, arginine 169, serine 197, and glutamine 298 each bind UDP-N-acetyl-alpha-D-glucosamine.

The protein belongs to the glycosyltransferase 28 family. MurG subfamily.

The protein localises to the cell inner membrane. The enzyme catalyses di-trans,octa-cis-undecaprenyl diphospho-N-acetyl-alpha-D-muramoyl-L-alanyl-D-glutamyl-meso-2,6-diaminopimeloyl-D-alanyl-D-alanine + UDP-N-acetyl-alpha-D-glucosamine = di-trans,octa-cis-undecaprenyl diphospho-[N-acetyl-alpha-D-glucosaminyl-(1-&gt;4)]-N-acetyl-alpha-D-muramoyl-L-alanyl-D-glutamyl-meso-2,6-diaminopimeloyl-D-alanyl-D-alanine + UDP + H(+). It participates in cell wall biogenesis; peptidoglycan biosynthesis. Its function is as follows. Cell wall formation. Catalyzes the transfer of a GlcNAc subunit on undecaprenyl-pyrophosphoryl-MurNAc-pentapeptide (lipid intermediate I) to form undecaprenyl-pyrophosphoryl-MurNAc-(pentapeptide)GlcNAc (lipid intermediate II). The sequence is that of UDP-N-acetylglucosamine--N-acetylmuramyl-(pentapeptide) pyrophosphoryl-undecaprenol N-acetylglucosamine transferase from Brucella suis (strain ATCC 23445 / NCTC 10510).